The sequence spans 68 residues: Conotoxin Mr3.3 (68 aa).

Positions 1–19 (MSRLGVLLTICLLLFPLTA) are cleaved as a signal peptide. The propeptide occupies 20-51 (VPLDGDQPADRPAERLQDDISSEHHPHFDSGR). A disordered region spans residues 22-46 (LDGDQPADRPAERLQDDISSEHHPH). Positions 27–46 (PADRPAERLQDDISSEHHPH) are enriched in basic and acidic residues. 3 disulfides stabilise this stretch: C53-C67, C54-C63, and C59-C66. P65 carries the post-translational modification 4-hydroxyproline.

Belongs to the conotoxin M superfamily. As to expression, expressed by the venom duct.

It localises to the secreted. The chain is Conotoxin Mr3.3 from Conus marmoreus (Marble cone).